A 483-amino-acid polypeptide reads, in one-letter code: Protein EFFECTOR OF TRANSCRIPTION 2 (483 aa).

Positions 64–112 (SCPGLYELGVAVIGQEQCRKLEPDIVLASYLGQAESVRSRLQRYGRSGA) constitute a GIY-YIG domain. Cx9Cx9RCx2HK repeat units follow at residues 278 to 303 (CGVLLEDGGCCIRSPVKGRKRCIEHK) and 338 to 363 (CGVILPDMEPCNKRPVPGRKRCEDHK). A compositionally biased stretch (basic and acidic residues) spans 380–396 (EKTVKDEKPDPESHTES). The interval 380–399 (EKTVKDEKPDPESHTESIEE) is disordered. Cx9Cx9RCx2HK repeat units lie at residues 406 to 431 (CEATTKNGLPCTRSSPKGSKRCWQHK) and 453 to 478 (CGVKLGNGLICERSPVKGRKRCEEHK).

As to expression, expressed in vascular tissues of stems, hypocotyls, leaves and flowers. Expressed in the vascular bundles of xylem in shoot parenchyma cells. Expressed in the remnant cytoplasm of differentiated fiber cells and in protoxylem element of parenchymal cells.

It is found in the cytoplasm. The protein resides in the nucleus. Its function is as follows. Transcriptional regulator involved in the regulation of cell differentiation in meristems. Probably regulates the expression of various KNAT genes involved in the maintenance of the cells in an undifferentiated, merismastic state. Plays a role in the regulation of gibberellin 20 oxidase and the gibberellin-regulated protein GASA4. Localizes in the nucleus during the cellular differentiation state and may act via a single strand cutting domain. Transcriptional regulator required for the induction of dormancy during late seed development. Interacts genetically with FUS3 and may be component of the same regulatory pathway during embryogenesis. Binds both linear and supercoiled DNA without sequence preference. In Arabidopsis thaliana (Mouse-ear cress), this protein is Protein EFFECTOR OF TRANSCRIPTION 2.